The primary structure comprises 860 residues: Leucine-rich repeat and death domain-containing protein 1 (860 aa).

The segment at 1 to 103 is disordered; sequence MSEKEGMSEV…TGTSQSLSSL (103 aa). Over residues 50-72 the composition is skewed to polar residues; sequence KSSNQIYETHPRQNTLESTSSSG. Residues 90 to 103 show a composition bias toward low complexity; it reads TSTRTGTSQSLSSL. LRR repeat units lie at residues 139–163, 164–186, 187–210, 211–233, 235–256, 257–279, 281–302, 303–325, 326–348, 350–371, 372–394, 396–417, 419–440, 441–463, 465–486, 487–510, 512–532, 533–555, 557–578, 579–601, 603–624, 627–650, 651–673, 675–696, 697–719, and 721–742; these read LGAD…ILKI, KYVK…DSGD, LLGL…IQLL, HNLR…ISQL, NIRQ…LECL, GNLE…LPSL, TLRV…LCFL, PKLI…IREL, KNLE…IFQL, KIKE…IENF, RELR…ISCC, MLEC…IHKL, NLRK…ISHL, NNIC…IKNC, KIIK…LCAL, DSLY…SFSK, LLHL…FCSL, INLK…ISNM, SLHV…LCTL, ENLQ…ICNL, GIQK…LCQL, LEQL…LSNM, TQLK…IGEL, NLVS…LLSL, NDLQ…IYNI, and SLKE…ICKG. Residues 764–852 form the Death domain; sequence EKIFKIVANN…EIMDKITALN (89 aa). One copy of the LRR 27 repeat lies at 856–860; the sequence is RAIKF.

In Homo sapiens (Human), this protein is Leucine-rich repeat and death domain-containing protein 1 (LRRD1).